The sequence spans 89 residues: Small ribosomal subunit protein uS15 (89 aa).

The segment covering 1–18 (MSLDTAEKQKLIENHQVH) has biased composition (basic and acidic residues). Residues 1–23 (MSLDTAEKQKLIENHQVHPTDTG) are disordered.

The protein belongs to the universal ribosomal protein uS15 family. In terms of assembly, part of the 30S ribosomal subunit. Forms a bridge to the 50S subunit in the 70S ribosome, contacting the 23S rRNA.

One of the primary rRNA binding proteins, it binds directly to 16S rRNA where it helps nucleate assembly of the platform of the 30S subunit by binding and bridging several RNA helices of the 16S rRNA. In terms of biological role, forms an intersubunit bridge (bridge B4) with the 23S rRNA of the 50S subunit in the ribosome. The chain is Small ribosomal subunit protein uS15 from Prochlorococcus marinus (strain MIT 9301).